The primary structure comprises 179 residues: Probable DNA-directed RNA polymerase subunit delta (179 aa).

One can recognise an HTH HARE-type domain in the interval 14 to 81 (MSLVELAYEI…GDQRWGLRSW (68 aa)). The segment at 108–179 (VVEEDFDEIE…DDLDDNEEEK (72 aa)) is disordered. Over residues 109–179 (VEEDFDEIEE…DDLDDNEEEK (71 aa)) the composition is skewed to acidic residues.

It belongs to the RpoE family. In terms of assembly, RNAP is composed of a core of 2 alpha, a beta and a beta' subunits. The core is associated with a delta subunit and one of several sigma factors.

Its function is as follows. Participates in both the initiation and recycling phases of transcription. In the presence of the delta subunit, RNAP displays an increased specificity of transcription, a decreased affinity for nucleic acids, and an increased efficiency of RNA synthesis because of enhanced recycling. In Bacillus pumilus (strain SAFR-032), this protein is Probable DNA-directed RNA polymerase subunit delta.